The following is a 659-amino-acid chain: Exoribonuclease 2 (659 aa).

Residues 189–531 (RKDLTALHFV…NHRLIKACIA (343 aa)) form the RNB domain. An S1 motif domain is found at 576–658 (KPEFQAEVQD…ETRSLIGNLV (83 aa)).

The protein belongs to the RNR ribonuclease family. RNase II subfamily.

Its subcellular location is the cytoplasm. The catalysed reaction is Exonucleolytic cleavage in the 3'- to 5'-direction to yield nucleoside 5'-phosphates.. Its function is as follows. Involved in mRNA degradation. Hydrolyzes single-stranded polyribonucleotides processively in the 3' to 5' direction. The chain is Exoribonuclease 2 from Actinobacillus succinogenes (strain ATCC 55618 / DSM 22257 / CCUG 43843 / 130Z).